We begin with the raw amino-acid sequence, 370 residues long: UDP-N-acetylglucosamine--N-acetylmuramyl-(pentapeptide) pyrophosphoryl-undecaprenol N-acetylglucosamine transferase (370 aa).

UDP-N-acetyl-alpha-D-glucosamine is bound by residues 15–17, Asn129, Arg171, Ser200, Ile256, and Gln301; that span reads TGG.

Belongs to the glycosyltransferase 28 family. MurG subfamily.

Its subcellular location is the cell membrane. The enzyme catalyses di-trans,octa-cis-undecaprenyl diphospho-N-acetyl-alpha-D-muramoyl-L-alanyl-D-glutamyl-meso-2,6-diaminopimeloyl-D-alanyl-D-alanine + UDP-N-acetyl-alpha-D-glucosamine = di-trans,octa-cis-undecaprenyl diphospho-[N-acetyl-alpha-D-glucosaminyl-(1-&gt;4)]-N-acetyl-alpha-D-muramoyl-L-alanyl-D-glutamyl-meso-2,6-diaminopimeloyl-D-alanyl-D-alanine + UDP + H(+). It participates in cell wall biogenesis; peptidoglycan biosynthesis. Cell wall formation. Catalyzes the transfer of a GlcNAc subunit on undecaprenyl-pyrophosphoryl-MurNAc-pentapeptide (lipid intermediate I) to form undecaprenyl-pyrophosphoryl-MurNAc-(pentapeptide)GlcNAc (lipid intermediate II). The protein is UDP-N-acetylglucosamine--N-acetylmuramyl-(pentapeptide) pyrophosphoryl-undecaprenol N-acetylglucosamine transferase of Caldicellulosiruptor saccharolyticus (strain ATCC 43494 / DSM 8903 / Tp8T 6331).